A 35-amino-acid polypeptide reads, in one-letter code: Bacteriocin lactococcin-G subunit beta (35 aa).

As to quaternary structure, bacteriocin activity requires interaction of alpha and beta peptides in a molar ratio of 7:1 or 8:1 respectively.

In terms of biological role, kills Lactococci. In Lactococcus lactis subsp. lactis (Streptococcus lactis), this protein is Bacteriocin lactococcin-G subunit beta.